The sequence spans 128 residues: Fluoride-specific ion channel FluC (128 aa).

4 helical membrane passes run 4-24, 39-59, 71-91, and 99-119; these read LLLA…RYLI, GTLI…EFSM, FLTT…YETI, and ITLG…FVVI. Na(+) is bound by residues Gly78 and Thr81.

The protein belongs to the fluoride channel Fluc/FEX (TC 1.A.43) family.

The protein localises to the cell membrane. The catalysed reaction is fluoride(in) = fluoride(out). Its activity is regulated as follows. Na(+) is not transported, but it plays an essential structural role and its presence is essential for fluoride channel function. In terms of biological role, fluoride-specific ion channel. Important for reducing fluoride concentration in the cell, thus reducing its toxicity. In Clostridium perfringens (strain ATCC 13124 / DSM 756 / JCM 1290 / NCIMB 6125 / NCTC 8237 / Type A), this protein is Fluoride-specific ion channel FluC.